We begin with the raw amino-acid sequence, 198 residues long: FMN-dependent NADH:quinone oxidoreductase (198 aa).

Residues 92-95 (MWNL) and 136-139 (SRGG) contribute to the FMN site.

This sequence belongs to the azoreductase type 1 family. Homodimer. The cofactor is FMN.

It catalyses the reaction 2 a quinone + NADH + H(+) = 2 a 1,4-benzosemiquinone + NAD(+). The enzyme catalyses N,N-dimethyl-1,4-phenylenediamine + anthranilate + 2 NAD(+) = 2-(4-dimethylaminophenyl)diazenylbenzoate + 2 NADH + 2 H(+). Functionally, quinone reductase that provides resistance to thiol-specific stress caused by electrophilic quinones. In terms of biological role, also exhibits azoreductase activity. Catalyzes the reductive cleavage of the azo bond in aromatic azo compounds to the corresponding amines. The sequence is that of FMN-dependent NADH:quinone oxidoreductase from Clostridium perfringens (strain ATCC 13124 / DSM 756 / JCM 1290 / NCIMB 6125 / NCTC 8237 / Type A).